The primary structure comprises 505 residues: MSLIINTFYSNKEIFLQELISNASDALDKIRYESLTDPSKLDGGKELKIDIIPNPRECILTLVNTGIGMTKADLINNLGAIAKSGTEAFMEAFQSCAEISMIGQFGVGFYSAYLVAEKVAITKHNDEEQYSWVSSAGSSFTLHVDHGEPIDRDTKVILHLKEDQTEYLEERWVKEVVKKHPQFIGCLIAVYLEKEPEKEISDDEEEKGEKEEEDKDDKEKPKTEDVGSDEEDDTDKNNKKKTKKIKEKYTDREELNQTKPIWTRNPDDITQEECGEFYKSLTSAWEDHLAVKQFPVEEQEENEQLCVHHVWIMDSFDDLMPEYVGFVREDKENNKKLDEVFSKISWLGIHEDSINWRHLSELLWSHTFQSGDEMTSLSEYVSCMKEAQKSICDIIGECKEQVANSAFVEQEWKKGFEVIYMSEPIDEYCVQQLKEFDGKSLLSVTKEGLELPEDEEEKKIMEESNVKFENLCRLMKEILDKKVERVTISSRLVSSPCRIVTSTYS.

ATP is bound by residues Asn22, Lys83, and Phe109. A disordered region spans residues 197-248; sequence EKEISDDEEEKGEKEEEDKDDKEKPKTEDVGSDEEDDTDKNNKKKTKKIKEK. Residues 200–216 show a composition bias toward acidic residues; that stretch reads ISDDEEEKGEKEEEDKD.

This sequence belongs to the heat shock protein 90 family. As to quaternary structure, homodimer.

The protein resides in the cytoplasm. Its function is as follows. Putative molecular chaperone that may promote the maturation, structural maintenance and proper regulation of specific target proteins. This chain is Putative heat shock protein HSP 90-beta 4 (HSP90AB4P), found in Homo sapiens (Human).